Here is a 176-residue protein sequence, read N- to C-terminus: ATP synthase subunit b (176 aa).

Residues 26-45 (VINLAIIIGVLVYFGRGLLG) traverse the membrane as a helical segment.

This sequence belongs to the ATPase B chain family. F-type ATPases have 2 components, F(1) - the catalytic core - and F(0) - the membrane proton channel. F(1) has five subunits: alpha(3), beta(3), gamma(1), delta(1), epsilon(1). F(0) has four main subunits: a(1), b(1), b'(1) and c(10-14). The alpha and beta chains form an alternating ring which encloses part of the gamma chain. F(1) is attached to F(0) by a central stalk formed by the gamma and epsilon chains, while a peripheral stalk is formed by the delta, b and b' chains.

It is found in the cellular thylakoid membrane. Its function is as follows. F(1)F(0) ATP synthase produces ATP from ADP in the presence of a proton or sodium gradient. F-type ATPases consist of two structural domains, F(1) containing the extramembraneous catalytic core and F(0) containing the membrane proton channel, linked together by a central stalk and a peripheral stalk. During catalysis, ATP synthesis in the catalytic domain of F(1) is coupled via a rotary mechanism of the central stalk subunits to proton translocation. In terms of biological role, component of the F(0) channel, it forms part of the peripheral stalk, linking F(1) to F(0). The sequence is that of ATP synthase subunit b from Synechococcus sp. (strain PCC 6716).